Here is a 400-residue protein sequence, read N- to C-terminus: GTPase Obg (400 aa).

The 159-residue stretch at 1–159 (MKFVDEVQIR…RTLKLELLLL (159 aa)) folds into the Obg domain. The 174-residue stretch at 160-333 (ADVGMLGLPN…VCYDILDLLD (174 aa)) folds into the OBG-type G domain. GTP contacts are provided by residues 166–173 (GLPNAGKS), 191–195 (FTTLV), 213–216 (DIPG), 283–286 (NKMD), and 314–316 (TAI). The Mg(2+) site is built by Ser-173 and Thr-193.

Belongs to the TRAFAC class OBG-HflX-like GTPase superfamily. OBG GTPase family. As to quaternary structure, monomer. The cofactor is Mg(2+).

It localises to the cytoplasm. Its function is as follows. An essential GTPase which binds GTP, GDP and possibly (p)ppGpp with moderate affinity, with high nucleotide exchange rates and a fairly low GTP hydrolysis rate. Plays a role in control of the cell cycle, stress response, ribosome biogenesis and in those bacteria that undergo differentiation, in morphogenesis control. This is GTPase Obg from Aeromonas hydrophila subsp. hydrophila (strain ATCC 7966 / DSM 30187 / BCRC 13018 / CCUG 14551 / JCM 1027 / KCTC 2358 / NCIMB 9240 / NCTC 8049).